The chain runs to 189 residues: Probable nicotinate-nucleotide adenylyltransferase (189 aa).

Belongs to the NadD family.

It catalyses the reaction nicotinate beta-D-ribonucleotide + ATP + H(+) = deamido-NAD(+) + diphosphate. Its pathway is cofactor biosynthesis; NAD(+) biosynthesis; deamido-NAD(+) from nicotinate D-ribonucleotide: step 1/1. In terms of biological role, catalyzes the reversible adenylation of nicotinate mononucleotide (NaMN) to nicotinic acid adenine dinucleotide (NaAD). This Cereibacter sphaeroides (strain ATCC 17023 / DSM 158 / JCM 6121 / CCUG 31486 / LMG 2827 / NBRC 12203 / NCIMB 8253 / ATH 2.4.1.) (Rhodobacter sphaeroides) protein is Probable nicotinate-nucleotide adenylyltransferase.